Reading from the N-terminus, the 177-residue chain is Ubiquitin-conjugating enzyme E2 C (177 aa).

The disordered stretch occupies residues Met-1–Val-31. A compositionally biased stretch (basic and acidic residues) spans Arg-14–Ser-30. In terms of domain architecture, UBC core spans Ser-30–Ser-175. The active-site Glycyl thioester intermediate is the Cys-114.

Belongs to the ubiquitin-conjugating enzyme family. In terms of assembly, component of the APC/C complex. In terms of processing, autoubiquitinated by the APC/C complex, leading to its degradation by the proteasome.

The catalysed reaction is S-ubiquitinyl-[E1 ubiquitin-activating enzyme]-L-cysteine + [E2 ubiquitin-conjugating enzyme]-L-cysteine = [E1 ubiquitin-activating enzyme]-L-cysteine + S-ubiquitinyl-[E2 ubiquitin-conjugating enzyme]-L-cysteine.. It carries out the reaction S-ubiquitinyl-[E1 ubiquitin-activating enzyme]-L-cysteine + [acceptor protein]-L-lysine = [E1 ubiquitin-activating enzyme]-L-cysteine + N(6)-monoubiquitinyl-[acceptor protein]-L-lysine.. It participates in protein modification; protein ubiquitination. In terms of biological role, catalyzes the covalent attachment of ubiquitin to other proteins. Acts as an essential factor of the anaphase promoting complex/cyclosome (APC/C), a cell cycle-regulated ubiquitin ligase that is essential for the transition from metaphase to anaphase in mitosis. Involved in both degradation of proteins responsible for maintaining sister chromatid cohesion at the onset of anaphase and of mitotic cyclins A and B at the exit of mitosis. Acts by initiating polyubiquitin chains on APC/C substrates, leading to the degradation of APC/C substrates by the proteasome and promoting mitotic exit. The polypeptide is Ubiquitin-conjugating enzyme E2 C (UBE2C) (Spisula solidissima (Atlantic surf-clam)).